A 1001-amino-acid polypeptide reads, in one-letter code: Serine/threonine-protein kinase TAO1-A (1001 aa).

A Protein kinase domain is found at 28 to 281 (FSDLREIGHG…SDELLKNMFV (254 aa)). Residues 34–42 (IGHGSFGAV) and Lys57 contribute to the ATP site. The active-site Proton acceptor is the Asp151. Disordered regions lie at residues 324 to 431 (PAVE…HKSH) and 567 to 586 (KEEL…EWLS). Positions 350–370 (SNQSIPSMSISASSQSSSVTS) are enriched in low complexity. Basic and acidic residues-rich tracts occupy residues 375–388 (SDDK…EGDH) and 577–586 (PKKEKQEWLS). Coiled coils occupy residues 458 to 651 (SELR…EHAM) and 754 to 877 (KAVL…EIEA). A disordered region spans residues 911–1001 (SHNPTGGPGP…ISNGSRMSYT (91 aa)). Over residues 921–930 (HWGHPMAGPP) the composition is skewed to low complexity. 2 stretches are compositionally biased toward polar residues: residues 949-967 (GSVQ…NSPQ) and 974-1001 (SGGQ…MSYT).

Belongs to the protein kinase superfamily. STE Ser/Thr protein kinase family. STE20 subfamily.

Its subcellular location is the cytoplasm. It catalyses the reaction L-seryl-[protein] + ATP = O-phospho-L-seryl-[protein] + ADP + H(+). It carries out the reaction L-threonyl-[protein] + ATP = O-phospho-L-threonyl-[protein] + ADP + H(+). Its function is as follows. Serine/threonine-protein kinase involved in various processes such as p38/mapk14 stress-activated MAPK cascade, DNA damage response and regulation of cytoskeleton stability. Acts as an activator of the p38/MAPK14 stress-activated MAPK cascade by mediating phosphorylation and subsequent activation of upstream MAP kinase kinases. In response to DNA damage, involved in the G2/M transition DNA damage checkpoint by activating the p38/MAPK14 stress-activated MAPK cascade. The sequence is that of Serine/threonine-protein kinase TAO1-A (taok1-a) from Xenopus laevis (African clawed frog).